Reading from the N-terminus, the 409-residue chain is Argininosuccinate synthase (409 aa).

9 to 17 serves as a coordination point for ATP; it reads AYSGGLDTS. Tyr86 serves as a coordination point for L-citrulline. Gly116 contacts ATP. L-aspartate-binding residues include Thr118, Asn122, and Asp123. Asn122 contributes to the L-citrulline binding site. 5 residues coordinate L-citrulline: Arg126, Ser174, Ser183, Glu259, and Tyr271.

Belongs to the argininosuccinate synthase family. Type 1 subfamily. As to quaternary structure, homotetramer.

The protein localises to the cytoplasm. The enzyme catalyses L-citrulline + L-aspartate + ATP = 2-(N(omega)-L-arginino)succinate + AMP + diphosphate + H(+). It participates in amino-acid biosynthesis; L-arginine biosynthesis; L-arginine from L-ornithine and carbamoyl phosphate: step 2/3. The protein is Argininosuccinate synthase of Halalkalibacterium halodurans (strain ATCC BAA-125 / DSM 18197 / FERM 7344 / JCM 9153 / C-125) (Bacillus halodurans).